We begin with the raw amino-acid sequence, 103 residues long: Acyl carrier protein homolog (103 aa).

The Carrier domain occupies 3-87; the sequence is ELTSEIKKEI…ETLEKVVQTT (85 aa). The residue at position 45 (Ser-45) is an O-(pantetheine 4'-phosphoryl)serine.

In terms of processing, 4'-phosphopantetheine is transferred from CoA to a specific serine of the apo-ACP-like protein.

The protein resides in the cytoplasm. In terms of biological role, acyl carrier protein. This is Acyl carrier protein homolog from Clostridium acetobutylicum (strain ATCC 824 / DSM 792 / JCM 1419 / IAM 19013 / LMG 5710 / NBRC 13948 / NRRL B-527 / VKM B-1787 / 2291 / W).